A 640-amino-acid polypeptide reads, in one-letter code: Chaperone protein DnaK (640 aa).

Thr196 bears the Phosphothreonine; by autocatalysis mark. Disordered stretches follow at residues 487–526 (GKEQ…KEEI) and 593–640 (SHLY…GNDK). Over residues 501–526 (TDAEISKMKEDAKEHAAEDQKRKEEI) the composition is skewed to basic and acidic residues. A compositionally biased stretch (polar residues) spans 595–613 (LYQSQGPESSQPETAAQSD). Over residues 630 to 640 (AEYEVIDGNDK) the composition is skewed to acidic residues.

The protein belongs to the heat shock protein 70 family.

Acts as a chaperone. This Pelodictyon phaeoclathratiforme (strain DSM 5477 / BU-1) protein is Chaperone protein DnaK.